The primary structure comprises 251 residues: MRTPIIAGNWKLFKKSSEAQDFVAELIPLVQKTTDVEIVIAPVFTVLSAVKRAIADCNIMLSAQDCFWEEEGAFTGEISPGMLVDAGCSHVIIGHSERRQYFGETDETVNRKIKAAITAGLTVLFCIGETLAEREADKTFEVLRTQIENGLAGLARGDLAKIVIAYEPVWAIGTGKTATDEQAQIAHAFIRKVVGELFTVQIAETIRILYGGSVKPENVRGLMNQPDIDGALVGGASLKADSFGAIVNYKA.

9–11 (NWK) provides a ligand contact to substrate. Residue His-95 is the Electrophile of the active site. Glu-167 acts as the Proton acceptor in catalysis. Substrate-binding positions include Gly-173, Ser-213, and 234–235 (GG).

The protein belongs to the triosephosphate isomerase family. In terms of assembly, homodimer.

It is found in the cytoplasm. It catalyses the reaction D-glyceraldehyde 3-phosphate = dihydroxyacetone phosphate. It participates in carbohydrate biosynthesis; gluconeogenesis. The protein operates within carbohydrate degradation; glycolysis; D-glyceraldehyde 3-phosphate from glycerone phosphate: step 1/1. Functionally, involved in the gluconeogenesis. Catalyzes stereospecifically the conversion of dihydroxyacetone phosphate (DHAP) to D-glyceraldehyde-3-phosphate (G3P). This chain is Triosephosphate isomerase, found in Geobacter metallireducens (strain ATCC 53774 / DSM 7210 / GS-15).